A 426-amino-acid chain; its full sequence is Diaminobutyrate--2-oxoglutarate transaminase (426 aa).

Lys274 is subject to N6-(pyridoxal phosphate)lysine.

Belongs to the class-III pyridoxal-phosphate-dependent aminotransferase family. It depends on pyridoxal 5'-phosphate as a cofactor.

The enzyme catalyses L-2,4-diaminobutanoate + 2-oxoglutarate = L-aspartate 4-semialdehyde + L-glutamate. Its pathway is amine and polyamine biosynthesis; ectoine biosynthesis; L-ectoine from L-aspartate 4-semialdehyde: step 1/3. Its function is as follows. Catalyzes reversively the conversion of L-aspartate beta-semialdehyde (ASA) to L-2,4-diaminobutyrate (DABA) by transamination with L-glutamate. This Oceanobacillus iheyensis (strain DSM 14371 / CIP 107618 / JCM 11309 / KCTC 3954 / HTE831) protein is Diaminobutyrate--2-oxoglutarate transaminase (ectB).